We begin with the raw amino-acid sequence, 500 residues long: Cryptochrome DASH (500 aa).

One can recognise a Photolyase/cryptochrome alpha/beta domain in the interval 4 to 138; that stretch reads KTVLVWYRND…PVRSFWGTTL (135 aa).

The protein belongs to the DNA photolyase class-1 family. It depends on FAD as a cofactor. (6R)-5,10-methylene-5,6,7,8-tetrahydrofolate serves as cofactor.

Functionally, may have a photoreceptor function. Binds DNA; probably functions as a transcriptional repressor. In Gloeobacter violaceus (strain ATCC 29082 / PCC 7421), this protein is Cryptochrome DASH (cry).